Reading from the N-terminus, the 125-residue chain is MKQEYKLKMLESEIRKVLSEALMEMKDPNIDPMKSLITISRVEVSKDKRYADVYVSVLGDEAKRKDVVNYFEQKKGYFRTYVAKNIRMYTAPELRFKEDKGIEATVRIGQLLDSIKESQKGDDNK.

This sequence belongs to the RbfA family. In terms of assembly, monomer. Binds 30S ribosomal subunits, but not 50S ribosomal subunits or 70S ribosomes.

It localises to the cytoplasm. Functionally, one of several proteins that assist in the late maturation steps of the functional core of the 30S ribosomal subunit. Associates with free 30S ribosomal subunits (but not with 30S subunits that are part of 70S ribosomes or polysomes). Required for efficient processing of 16S rRNA. May interact with the 5'-terminal helix region of 16S rRNA. The polypeptide is Ribosome-binding factor A (Fervidobacterium nodosum (strain ATCC 35602 / DSM 5306 / Rt17-B1)).